We begin with the raw amino-acid sequence, 676 residues long: Pescadillo homolog (676 aa).

Residues 298 to 327 (IAAMADDEDEQEVEMAEADAEDDDEEENTE) adopt a coiled-coil conformation. Disordered stretches follow at residues 298–338 (IAAM…TAPD), 413–439 (PLAN…STKP), 478–502 (VKPK…EAEA), and 515–676 (EVDD…AERA). A compositionally biased stretch (acidic residues) spans 302–327 (ADDEDEQEVEMAEADAEDDDEEENTE). Residues 351–466 (EIASLFAPFT…KLLRPDLYAP (116 aa)) form the BRCT domain. Residues 415–427 (ANGASAAGAEDAA) are compositionally biased toward low complexity. Composition is skewed to acidic residues over residues 515–524 (EVDDDEDMDA), 539–557 (DVAD…DAEG), and 565–577 (FDDE…DISE). A coiled-coil region spans residues 568–676 (ESEAESDISE…EKAKAAAERA (109 aa)). Basic and acidic residues-rich tracts occupy residues 579-608 (EAAR…KKEQ), 620-631 (KRAEEEERDRQK), 643-659 (KRIE…SENL), and 666-676 (LEKAKAAAERA).

It belongs to the pescadillo family. In terms of assembly, component of the NOP7 complex, composed of ERB1, NOP7 and YTM1. The complex is held together by ERB1, which interacts with NOP7 via its N-terminal domain and with YTM1 via a high-affinity interaction between the seven-bladed beta-propeller domains of the 2 proteins. The NOP7 complex associates with the 66S pre-ribosome.

Its subcellular location is the nucleus. The protein resides in the nucleolus. It is found in the nucleoplasm. Functionally, component of the NOP7 complex, which is required for maturation of the 25S and 5.8S ribosomal RNAs and formation of the 60S ribosome. The chain is Pescadillo homolog from Phaeosphaeria nodorum (strain SN15 / ATCC MYA-4574 / FGSC 10173) (Glume blotch fungus).